The following is a 347-amino-acid chain: Haptoglobin (347 aa).

The signal sequence occupies residues 1-18; it reads MRALGAVVTLLLWGQLFA. The Sushi domain occupies 31–88; sequence DSCPKPPEIANGYVEHLVRYRCRQFYKLQTEGDGIYTLNSEKQWVNPAAGDKLPKCEA. 4 cysteine pairs are disulfide-bonded: Cys52/Cys86, Cys90/Cys207, Cys250/Cys281, and Cys292/Cys322. Positions 103 to 345 constitute a Peptidase S1 domain; that stretch reads IIGGSMDAKG…LKDWVQETMA (243 aa). 2 N-linked (GlcNAc...) asparagine glycosylation sites follow: Asn148 and Asn152. Residues 259–264 form an interaction with CD163 region; it reads VPEKKG.

The protein belongs to the peptidase S1 family. As to quaternary structure, tetramer of two alpha and two beta chains; disulfide-linked. The hemoglobin/haptoglobin complex is composed of a haptoglobin dimer bound to two hemoglobin alpha-beta dimers. Interacts with CD163. Interacts with ERGIC3. In terms of tissue distribution, expressed by the liver and secreted in plasma.

It localises to the secreted. In terms of biological role, as a result of hemolysis, hemoglobin is found to accumulate in the kidney and is secreted in the urine. Haptoglobin captures, and combines with free plasma hemoglobin to allow hepatic recycling of heme iron and to prevent kidney damage. Haptoglobin also acts as an antioxidant, has antibacterial activity and plays a role in modulating many aspects of the acute phase response. Hemoglobin/haptoglobin complexes are rapidly cleared by the macrophage CD163 scavenger receptor expressed on the surface of liver Kupfer cells through an endocytic lysosomal degradation pathway. The protein is Haptoglobin (Hp) of Rattus norvegicus (Rat).